The following is a 755-amino-acid chain: DNA ligase 1 (755 aa).

The N-terminal 44 residues, Met-1–Phe-44, are a transit peptide targeting the mitochondrion. N-acetylserine is present on Arg-2. A compositionally biased stretch (polar residues) spans Ser-47–Lys-60. Disordered stretches follow at residues Ser-47–Glu-79 and Pro-97–Val-127. Phosphoserine is present on residues Ser-58 and Ser-75. Residues Ser-102–Ser-114 show a composition bias toward low complexity. Residues Ser-119 and Ser-123 each carry the phosphoserine modification. The tract at residues Lys-309–Thr-318 is interaction with target DNA. Glu-417 lines the ATP pocket. Lys-419 (N6-AMP-lysine intermediate) is an active-site residue. Positions 424 and 440 each coordinate ATP. Glu-472 provides a ligand contact to Mg(2+). The interval Lys-493–Lys-495 is interaction with target DNA. Residue Glu-571 participates in Mg(2+) binding. Residues Lys-576, Arg-590, and Lys-596 each contribute to the ATP site.

The protein belongs to the ATP-dependent DNA ligase family. Mg(2+) is required as a cofactor.

The protein resides in the mitochondrion. Its subcellular location is the nucleus. It catalyses the reaction ATP + (deoxyribonucleotide)n-3'-hydroxyl + 5'-phospho-(deoxyribonucleotide)m = (deoxyribonucleotide)n+m + AMP + diphosphate.. Its function is as follows. DNA ligase that seals nicks in double-stranded DNA during DNA replication, DNA recombination and DNA repair. The mitochondrial form is required for mitochondrial DNA maintenance but is non-essential while the nuclear form is essential for cell viability. The polypeptide is DNA ligase 1 (CDC9) (Saccharomyces cerevisiae (strain ATCC 204508 / S288c) (Baker's yeast)).